The primary structure comprises 480 residues: Glycogen synthase (480 aa).

Lys-15 contributes to the ADP-alpha-D-glucose binding site.

Belongs to the glycosyltransferase 1 family. Bacterial/plant glycogen synthase subfamily.

The catalysed reaction is [(1-&gt;4)-alpha-D-glucosyl](n) + ADP-alpha-D-glucose = [(1-&gt;4)-alpha-D-glucosyl](n+1) + ADP + H(+). Its pathway is glycan biosynthesis; glycogen biosynthesis. Functionally, synthesizes alpha-1,4-glucan chains using ADP-glucose. This chain is Glycogen synthase, found in Clostridioides difficile (strain 630) (Peptoclostridium difficile).